The following is a 318-amino-acid chain: DNA polymerase IV (318 aa).

In terms of domain architecture, UmuC spans I6–G186. Mg(2+) is bound by residues D10 and D104. Residue E105 is part of the active site.

Belongs to the DNA polymerase type-Y family. In terms of assembly, monomer. It depends on Mg(2+) as a cofactor.

It is found in the cytoplasm. The catalysed reaction is DNA(n) + a 2'-deoxyribonucleoside 5'-triphosphate = DNA(n+1) + diphosphate. Its function is as follows. Poorly processive, error-prone DNA polymerase involved in untargeted mutagenesis. Copies undamaged DNA at stalled replication forks, which arise in vivo from mismatched or misaligned primer ends. These misaligned primers can be extended by PolIV. Exhibits no 3'-5' exonuclease (proofreading) activity. May be involved in translesional synthesis, in conjunction with the beta clamp from PolIII. The chain is DNA polymerase IV from Neisseria meningitidis serogroup B (strain ATCC BAA-335 / MC58).